The primary structure comprises 139 residues: Large ribosomal subunit protein uL16 (139 aa).

Belongs to the universal ribosomal protein uL16 family. As to quaternary structure, part of the 50S ribosomal subunit.

Functionally, binds 23S rRNA and is also seen to make contacts with the A and possibly P site tRNAs. This is Large ribosomal subunit protein uL16 from Picosynechococcus sp. (strain ATCC 27264 / PCC 7002 / PR-6) (Agmenellum quadruplicatum).